The primary structure comprises 156 residues: ATP synthase subunit b (156 aa).

Residues 1–21 traverse the membrane as a helical segment; sequence MSINATLLIQIIAFVLLIWFV.

Belongs to the ATPase B chain family. As to quaternary structure, F-type ATPases have 2 components, F(1) - the catalytic core - and F(0) - the membrane proton channel. F(1) has five subunits: alpha(3), beta(3), gamma(1), delta(1), epsilon(1). F(0) has three main subunits: a(1), b(2) and c(10-14). The alpha and beta chains form an alternating ring which encloses part of the gamma chain. F(1) is attached to F(0) by a central stalk formed by the gamma and epsilon chains, while a peripheral stalk is formed by the delta and b chains.

It is found in the cell inner membrane. F(1)F(0) ATP synthase produces ATP from ADP in the presence of a proton or sodium gradient. F-type ATPases consist of two structural domains, F(1) containing the extramembraneous catalytic core and F(0) containing the membrane proton channel, linked together by a central stalk and a peripheral stalk. During catalysis, ATP synthesis in the catalytic domain of F(1) is coupled via a rotary mechanism of the central stalk subunits to proton translocation. Functionally, component of the F(0) channel, it forms part of the peripheral stalk, linking F(1) to F(0). The chain is ATP synthase subunit b from Hydrogenovibrio crunogenus (strain DSM 25203 / XCL-2) (Thiomicrospira crunogena).